Consider the following 264-residue polypeptide: ATP synthase subunit a (264 aa).

Transmembrane regions (helical) follow at residues 29 to 49 (TWHIDSLFFSVGLGVLFLWIF), 87 to 107 (NALIAPLALTIFVWVFMMNFM), 134 to 154 (DVNITFSLAIGVFVLIIYYSI), 177 to 197 (IPVNLLLETVTLIAKPISLAL), 208 to 228 (LIFILIALMYGTNLLLSSLGV), and 235 to 255 (LIFHILVITLQAFIFMMLTIV).

The protein belongs to the ATPase A chain family. In terms of assembly, F-type ATPases have 2 components, CF(1) - the catalytic core - and CF(0) - the membrane proton channel. CF(1) has five subunits: alpha(3), beta(3), gamma(1), delta(1), epsilon(1). CF(0) has three main subunits: a(1), b(2) and c(9-12). The alpha and beta chains form an alternating ring which encloses part of the gamma chain. CF(1) is attached to CF(0) by a central stalk formed by the gamma and epsilon chains, while a peripheral stalk is formed by the delta and b chains.

The protein resides in the cell inner membrane. Its function is as follows. Key component of the proton channel; it plays a direct role in the translocation of protons across the membrane. The chain is ATP synthase subunit a from Shewanella sp. (strain MR-4).